A 427-amino-acid polypeptide reads, in one-letter code: UDP-N-acetylglucosamine 1-carboxyvinyltransferase 1 (427 aa).

A phosphoenolpyruvate-binding site is contributed by 23 to 24 (KN). Arg-96 lines the UDP-N-acetyl-alpha-D-glucosamine pocket. Cys-120 acts as the Proton donor in catalysis. Cys-120 bears the 2-(S-cysteinyl)pyruvic acid O-phosphothioketal mark. UDP-N-acetyl-alpha-D-glucosamine-binding positions include 125–129 (RPIDL), Asp-309, and Val-331.

It belongs to the EPSP synthase family. MurA subfamily.

Its subcellular location is the cytoplasm. It carries out the reaction phosphoenolpyruvate + UDP-N-acetyl-alpha-D-glucosamine = UDP-N-acetyl-3-O-(1-carboxyvinyl)-alpha-D-glucosamine + phosphate. It functions in the pathway cell wall biogenesis; peptidoglycan biosynthesis. Functionally, cell wall formation. Adds enolpyruvyl to UDP-N-acetylglucosamine. This is UDP-N-acetylglucosamine 1-carboxyvinyltransferase 1 from Streptococcus pneumoniae (strain ATCC BAA-255 / R6).